Reading from the N-terminus, the 124-residue chain is Putative iron-sulfur cluster insertion protein ErpA (124 aa).

Cys49, Cys113, and Cys115 together coordinate iron-sulfur cluster.

It belongs to the HesB/IscA family. In terms of assembly, homodimer. It depends on iron-sulfur cluster as a cofactor.

Required for insertion of 4Fe-4S clusters. This Acidovorax sp. (strain JS42) protein is Putative iron-sulfur cluster insertion protein ErpA.